The chain runs to 367 residues: MNVLQLMQQHDTMPETYKRLSVEEMEKRVARVKRELGTRLFIPGHHYQKDEVIQFADATGDSLQLAQVAAKNKEAEYIVFCGVHFMAETADILTSDEQIVILPDMRAGCSMADMAEIEQVERAWPILQQLFGDTILPLTYVNSTAAIKAFVGVHGGATVTSSNAKKMVAWAFTQKERIFFLPDQHLGRNTAYDLGVPLEQMAVWDPITNTLQYEGDVQQIKVILWKGHCSVHENFTVKHIEHIRKTKPDMKIIVHPECSWEVVQQADDAGSTKYIIETIANAPAGSKWAIGTEMNLVNRIIQQHPDKEIVSLNPYMCPCLTMNRIDLPHLLWALESLLEGKVVNRITVPKDVAEGAMLALERMLARA.

Iminosuccinate contacts are provided by His-45 and Ser-62. Cys-109 serves as a coordination point for [4Fe-4S] cluster. Residues Tyr-140–Asn-142 and Ser-161 contribute to the iminosuccinate site. Cys-229 is a [4Fe-4S] cluster binding site. Iminosuccinate is bound by residues His-255–Glu-257 and Thr-272. Residue Cys-319 participates in [4Fe-4S] cluster binding.

The protein belongs to the quinolinate synthase family. Type 3 subfamily. [4Fe-4S] cluster is required as a cofactor.

The protein resides in the cytoplasm. The catalysed reaction is iminosuccinate + dihydroxyacetone phosphate = quinolinate + phosphate + 2 H2O + H(+). The protein operates within cofactor biosynthesis; NAD(+) biosynthesis; quinolinate from iminoaspartate: step 1/1. Functionally, catalyzes the condensation of iminoaspartate with dihydroxyacetone phosphate to form quinolinate. This chain is Quinolinate synthase, found in Anoxybacillus flavithermus (strain DSM 21510 / WK1).